Reading from the N-terminus, the 329-residue chain is Cytoplasmic phosphatidylinositol transfer protein 1 (329 aa).

Residues 267–329 are disordered; the sequence is SHGGYSSAPS…GNKPSLAKPE (63 aa).

The protein belongs to the PtdIns transfer protein family. PI transfer class IIB subfamily.

The protein localises to the cytoplasm. The enzyme catalyses a 1,2-diacyl-sn-glycero-3-phospho-(1D-myo-inositol)(in) = a 1,2-diacyl-sn-glycero-3-phospho-(1D-myo-inositol)(out). It catalyses the reaction a 1,2-diacyl-sn-glycero-3-phosphate(in) = a 1,2-diacyl-sn-glycero-3-phosphate(out). Its function is as follows. Catalyzes the transfer of phosphatidylinositol (PI) and phosphatidic acid (PA) between membranes. Binds PA derived from the phospholipase D signaling pathway and among the cellular PA species, preferably binds to the C16:0/16:1 and C16:1/18:1 PA species. The chain is Cytoplasmic phosphatidylinositol transfer protein 1 (pitpnc1) from Xenopus tropicalis (Western clawed frog).